The sequence spans 427 residues: Histidine--tRNA ligase (427 aa).

This sequence belongs to the class-II aminoacyl-tRNA synthetase family. In terms of assembly, homodimer.

It localises to the cytoplasm. The catalysed reaction is tRNA(His) + L-histidine + ATP = L-histidyl-tRNA(His) + AMP + diphosphate + H(+). This is Histidine--tRNA ligase from Streptococcus suis (strain 98HAH33).